The following is a 1202-amino-acid chain: Ribonuclease P protein component, mitochondrial (1202 aa).

Residues 1–122 constitute a mitochondrion transit peptide; it reads MAFKSFIYSK…NNNNNQHRYY (122 aa). A disordered region spans residues 109–134; the sequence is NYVNNNNNNQHRYYSTGPTLPTNQYD. A compositionally biased stretch (polar residues) spans 118–134; sequence QHRYYSTGPTLPTNQYD.

As to quaternary structure, consists of an RNA moiety (RPM1) and the protein component (RPM2). Both are necessary for full enzymatic activity.

It is found in the mitochondrion. The catalysed reaction is Endonucleolytic cleavage of RNA, removing 5'-extranucleotides from tRNA precursor.. Ribonuclease P generates mature tRNA molecules by cleaving their 5'-ends. The sequence is that of Ribonuclease P protein component, mitochondrial (RPM2) from Saccharomyces cerevisiae (strain ATCC 204508 / S288c) (Baker's yeast).